A 170-amino-acid polypeptide reads, in one-letter code: Large ribosomal subunit protein uL11 (170 aa).

The protein belongs to the universal ribosomal protein uL11 family. In terms of assembly, part of the ribosomal stalk of the 50S ribosomal subunit. Interacts with L10 and the large rRNA to form the base of the stalk. L10 forms an elongated spine to which L12 dimers bind in a sequential fashion forming a multimeric L10(L12)X complex.

In terms of biological role, forms part of the ribosomal stalk which helps the ribosome interact with GTP-bound translation factors. This chain is Large ribosomal subunit protein uL11, found in Saccharolobus solfataricus (strain ATCC 35092 / DSM 1617 / JCM 11322 / P2) (Sulfolobus solfataricus).